The primary structure comprises 202 residues: Biogenesis of lysosome-related organelles complex 1 subunit 3 (202 aa).

Residues 1-11 (MASQGRRRRPL) show a composition bias toward basic residues. Residues 1 to 82 (MASQGRRRRP…PTAAPRDLPP (82 aa)) form a disordered region. Residues 41–55 (LGPSGPTRGRPTGLR) are compositionally biased toward low complexity. The span at 61–71 (AETDSEPEPEP) shows a compositional bias: acidic residues. Phosphothreonine is present on Thr63. Ser65 is subject to Phosphoserine.

It belongs to the BLOC1S3 family. Interacts with BLOC1S4, BLOC1S5 and BLOC1S6. Component of the biogenesis of lysosome-related organelles complex 1 (BLOC-1) composed of BLOC1S1, BLOC1S2, BLOC1S3, BLOC1S4, BLOC1S5, BLOC1S6, DTNBP1/BLOC1S7 and SNAPIN/BLOC1S8. Octamer composed of one copy each BLOC1S1, BLOC1S2, BLOC1S3, BLOC1S4, BLOC1S5, BLOC1S6, DTNBP1/BLOC1S7 and SNAPIN/BLOC1S8. The BLOC-1 complex associates with the AP-3 protein complex and membrane protein cargos. Interacts directly with BLOC1S2.

The protein resides in the cytoplasm. Component of the BLOC-1 complex, a complex that is required for normal biogenesis of lysosome-related organelles (LRO), such as platelet dense granules and melanosomes. In concert with the AP-3 complex, the BLOC-1 complex is required to target membrane protein cargos into vesicles assembled at cell bodies for delivery into neurites and nerve terminals. The BLOC-1 complex, in association with SNARE proteins, is also proposed to be involved in neurite extension. Plays a role in intracellular vesicle trafficking. This chain is Biogenesis of lysosome-related organelles complex 1 subunit 3 (BLOC1S3), found in Homo sapiens (Human).